Reading from the N-terminus, the 145-residue chain is Bacilliredoxin BLi02578/BL01507 (145 aa).

The protein belongs to the bacilliredoxin family.

This Bacillus licheniformis (strain ATCC 14580 / DSM 13 / JCM 2505 / CCUG 7422 / NBRC 12200 / NCIMB 9375 / NCTC 10341 / NRRL NRS-1264 / Gibson 46) protein is Bacilliredoxin BLi02578/BL01507.